The sequence spans 134 residues: Complexin-2 (134 aa).

A disordered region spans residues M1–E114. The segment covering D15–A85 has biased composition (basic and acidic residues). Positions P28 to A84 form a coiled coil. The interval L41 to P97 is interaction with the SNARE complex. S93 carries the phosphoserine modification.

It belongs to the complexin/synaphin family. As to quaternary structure, binds to the SNARE core complex containing SNAP25, VAMP2 and STX1A. As to expression, nervous system. Also present in adrenal chromaffin cells (at protein level).

The protein resides in the cytoplasm. Its subcellular location is the cytosol. It localises to the presynapse. It is found in the nucleus. The protein localises to the perikaryon. Negatively regulates the formation of synaptic vesicle clustering at active zone to the presynaptic membrane in postmitotic neurons. Positively regulates a late step in exocytosis of various cytoplasmic vesicles, such as synaptic vesicles and other secretory vesicles. Also involved in mast cell exocytosis. The polypeptide is Complexin-2 (CPLX2) (Bos taurus (Bovine)).